The chain runs to 451 residues: Cytosolic Fe-S cluster assembly factor NAR1 (451 aa).

[4Fe-4S] cluster contacts are provided by Cys-20, Cys-56, Cys-59, Cys-62, Cys-166, Cys-213, Cys-382, and Cys-386.

The protein belongs to the NARF family.

Functionally, component of the cytosolic Fe/S protein assembly machinery. Required for maturation of extramitochondrial Fe/S proteins. May play a role in the transfer of pre-assembled Fe/S clusters to target apoproteins. This is Cytosolic Fe-S cluster assembly factor NAR1 (NAR1) from Eremothecium gossypii (strain ATCC 10895 / CBS 109.51 / FGSC 9923 / NRRL Y-1056) (Yeast).